The following is a 331-amino-acid chain: Acyl-CoA desaturase 1 (331 aa).

Residues 1 to 46 lie on the Cytoplasmic side of the membrane; the sequence is MTEVDDGCGGRLRGSVLLEDECDLKQECETPTHSLVQGRDPPVVVV. A helical transmembrane segment spans residues 47–67; sequence WRNVVLMSVLHTAAVYGLVLL. Substrate is bound at residue Asn-49. Residues 68-71 lie on the Lumenal side of the membrane; that stretch reads PSAS. A helical transmembrane segment spans residues 72-90; sequence AYTLLAFCFVSSALGITAG. At 91-189 the chain is on the cytoplasmic side; the sequence is AHRLWSHRSY…DRVVMFQRRF (99 aa). Residues His-92 and His-97 each coordinate Fe cation. A Histidine box-1 motif is present at residues 92–97; that stretch reads HRLWSH. Substrate-binding residues include Asn-120, Arg-127, and Asp-128. Fe cation contacts are provided by His-129, His-132, and His-133. Residues 129 to 133 carry the Histidine box-2 motif; that stretch reads HRVHH. Lys-161 lines the substrate pocket. The helical transmembrane segment at 190 to 209 threads the bilayer; the sequence is YKHSVVVMCFLIPAMLPWFL. Over 210 to 213 the chain is Lumenal; sequence WAES. Residues 214 to 235 form a helical membrane-spanning segment; sequence LWVGYFVPVLLRYALVLNATWL. Trp-234 contributes to the substrate binding site. The Cytoplasmic segment spans residues 236 to 331; sequence VNSAAHMWGN…RTGDGSHRSG (96 aa). Residues His-241, His-270, His-273, and His-274 each contribute to the Fe cation site. The Histidine box-3 motif lies at 270–274; the sequence is HNYHH.

Belongs to the fatty acid desaturase type 1 family. Fe(2+) is required as a cofactor. In terms of tissue distribution, expression is highest in liver, followed by brain and intestine, and lowest in spleen. Also expressed in heart, gill and muscle.

The protein resides in the endoplasmic reticulum membrane. It catalyses the reaction octadecanoyl-CoA + 2 Fe(II)-[cytochrome b5] + O2 + 2 H(+) = (9Z)-octadecenoyl-CoA + 2 Fe(III)-[cytochrome b5] + 2 H2O. Stearoyl-CoA desaturase that utilizes O(2) and electrons from reduced cytochrome b5 to introduce the first double bond into saturated fatty acyl-CoA substrates. Catalyzes the insertion of a cis double bond at the delta-9 position into fatty acyl-CoA substrates including palmitoyl-CoA and stearoyl-CoA. Contributes to the biosynthesis of membrane phospholipids, cholesterol esters and triglycerides. The protein is Acyl-CoA desaturase 1 of Tachysurus fulvidraco (Yellow catfish).